The sequence spans 162 residues: FCS-Like Zinc finger 6 (162 aa).

Disordered regions lie at residues 25–47 (NLPS…YGSN) and 121–162 (RQEQ…AAAV). Residues 27–47 (PSESEPSNQQKPTVASPYGSN) show a composition bias toward polar residues. The FLZ-type zinc-finger motif lies at 88-132 (HFLRSCALCERLLVPGRDIYMYRGDKAFCSSECRQEQMAQDERKE). Residues 147–162 (APARAKPGKGRAAAAV) show a composition bias toward low complexity.

This sequence belongs to the FLZ family. Interacts with KIN10 and KIN11 via its FLZ-type zinc finger domain. Early expressed in hypocotyl and cotyledon. Later expressed in old or senescing leaves and in pistil, pollen and filament of open flowers.

Its subcellular location is the nucleus. The protein localises to the cytoplasm. It is found in the endoplasmic reticulum. Its function is as follows. May act as an adapter to facilitate the interaction of SnRK1 complex with effector proteins, conferring tissue- and stimulus-type specific differences in the SnRK1 regulation pathway. Negatively regulates KIN10 leading to a repression of the SnRK1 signaling pathway. The protein is FCS-Like Zinc finger 6 of Arabidopsis thaliana (Mouse-ear cress).